The chain runs to 468 residues: UDP-N-acetylmuramoyl-L-alanine--L-glutamate ligase (468 aa).

Residue 122-128 (GTKGKST) participates in ATP binding.

This sequence belongs to the MurCDEF family. MurD2 subfamily.

It localises to the cytoplasm. The catalysed reaction is UDP-N-acetyl-alpha-D-muramoyl-L-alanine + L-glutamate + ATP = UDP-N-acetyl-alpha-D-muramoyl-L-alanyl-L-glutamate + ADP + phosphate + H(+). The protein operates within cell wall biogenesis; peptidoglycan biosynthesis. In terms of biological role, cell wall formation. Catalyzes the addition of L-glutamate to the nucleotide precursor UDP-N-acetylmuramoyl-L-alanine. This is UDP-N-acetylmuramoyl-L-alanine--L-glutamate ligase from Xylella fastidiosa (strain 9a5c).